The following is a 608-amino-acid chain: Fatty acid amide hydrolase (608 aa).

Residues K206 and S282 each act as charge relay system in the active site. 303 to 306 (GGGS) lines the substrate pocket. S306 serves as the catalytic Acyl-ester intermediate.

This sequence belongs to the amidase family. As to quaternary structure, forms homodimers.

The protein localises to the endoplasmic reticulum membrane. Its subcellular location is the cell membrane. The catalysed reaction is N-(9Z,12Z-octadecadienoyl)-ethanolamine + H2O = ethanolamine + (9Z,12Z)-octadecadienoate. It catalyses the reaction N-hexadecanoylethanolamine + H2O = ethanolamine + hexadecanoate. The enzyme catalyses N-dodecanoylethanolamine + H2O = dodecanoate + ethanolamine. Its activity is regulated as follows. Inhibited by methyl arachidonyl fluorophosphonate (MAFP). In terms of biological role, catalyzes the hydrolysis of bioactive endogenous fatty acid amides to their corresponding acids. The hydrolysis of endogenous amidated lipids terminates their participation as lipid mediators in various signaling systems. Converts a wide range of N-acylethanolamines (NAEs) to their corresponding free fatty acids and ethanolamine. The sequence is that of Fatty acid amide hydrolase from Oryza sativa subsp. indica (Rice).